The primary structure comprises 257 residues: Acetylglutamate kinase (257 aa).

Substrate-binding positions include 43-44 (GG), Arg65, and Asn157. ATP is bound by residues 180–185 (DVSGIL) and 208–210 (IIT).

The protein belongs to the acetylglutamate kinase family. ArgB subfamily. In terms of assembly, homodimer.

Its subcellular location is the cytoplasm. The enzyme catalyses N-acetyl-L-glutamate + ATP = N-acetyl-L-glutamyl 5-phosphate + ADP. It functions in the pathway amino-acid biosynthesis; L-arginine biosynthesis; N(2)-acetyl-L-ornithine from L-glutamate: step 2/4. Catalyzes the ATP-dependent phosphorylation of N-acetyl-L-glutamate. This Pectobacterium carotovorum subsp. carotovorum (strain PC1) protein is Acetylglutamate kinase.